Consider the following 361-residue polypeptide: Chorismate synthase (361 aa).

NADP(+) contacts are provided by Arg-48 and Arg-54. FMN is bound by residues 125–127 (RSS), 238–239 (NA), Gly-278, 293–297 (KPTSS), and Arg-319.

Belongs to the chorismate synthase family. Homotetramer. Requires FMNH2 as cofactor.

The enzyme catalyses 5-O-(1-carboxyvinyl)-3-phosphoshikimate = chorismate + phosphate. It functions in the pathway metabolic intermediate biosynthesis; chorismate biosynthesis; chorismate from D-erythrose 4-phosphate and phosphoenolpyruvate: step 7/7. In terms of biological role, catalyzes the anti-1,4-elimination of the C-3 phosphate and the C-6 proR hydrogen from 5-enolpyruvylshikimate-3-phosphate (EPSP) to yield chorismate, which is the branch point compound that serves as the starting substrate for the three terminal pathways of aromatic amino acid biosynthesis. This reaction introduces a second double bond into the aromatic ring system. The protein is Chorismate synthase of Shigella flexneri serotype 5b (strain 8401).